Reading from the N-terminus, the 236-residue chain is 2-C-methyl-D-erythritol 4-phosphate cytidylyltransferase (236 aa).

It belongs to the IspD/TarI cytidylyltransferase family. IspD subfamily. As to quaternary structure, homodimer.

The enzyme catalyses 2-C-methyl-D-erythritol 4-phosphate + CTP + H(+) = 4-CDP-2-C-methyl-D-erythritol + diphosphate. Its pathway is isoprenoid biosynthesis; isopentenyl diphosphate biosynthesis via DXP pathway; isopentenyl diphosphate from 1-deoxy-D-xylulose 5-phosphate: step 2/6. Its function is as follows. Catalyzes the formation of 4-diphosphocytidyl-2-C-methyl-D-erythritol from CTP and 2-C-methyl-D-erythritol 4-phosphate (MEP). This Salmonella paratyphi B (strain ATCC BAA-1250 / SPB7) protein is 2-C-methyl-D-erythritol 4-phosphate cytidylyltransferase.